Consider the following 203-residue polypeptide: Casparian strip membrane protein 1 (203 aa).

Ala-2 carries the N-acetylalanine modification. Over 2 to 40 (AKESTTIDVGEPSTVTKSSSHVVKKKGFVAAAAGGGAKR) the chain is Cytoplasmic. A helical membrane pass occupies residues 41–61 (GLAIFDFLLRLAAIGVTIGAA). The Extracellular portion of the chain corresponds to 62-92 (SVMYTAQETLPFFTQFLQFQAGYDDLPAFQY). Residues 93–113 (FVIAVAIVASYLVLSLPFSIV) form a helical membrane-spanning segment. Topologically, residues 114–124 (TIVRPLAVAPR) are cytoplasmic. A helical membrane pass occupies residues 125–145 (LILLIFDTLVVTLNTSAAAAA). The Extracellular segment spans residues 146-177 (ASIVYLAHNGNQSTNWLPICQQFGDFCQNVST). N-linked (GlcNAc...) asparagine glycans are attached at residues Asn-156 and Asn-174. The helical transmembrane segment at 178 to 198 (AVVAASIAILFFIVLIIISAI) threads the bilayer. The Cytoplasmic portion of the chain corresponds to 199-203 (ALKRH).

The protein belongs to the Casparian strip membrane proteins (CASP) family. In terms of assembly, homodimer and heterodimers.

It localises to the cell membrane. In terms of biological role, regulates membrane-cell wall junctions and localized cell wall deposition. Required for establishment of the Casparian strip membrane domain (CSD) and the subsequent formation of Casparian strips, a cell wall modification of the root endodermis that determines an apoplastic barrier between the intraorganismal apoplasm and the extraorganismal apoplasm and prevents lateral diffusion. This Arabidopsis lyrata subsp. lyrata (Lyre-leaved rock-cress) protein is Casparian strip membrane protein 1.